The primary structure comprises 181 residues: BURP domain-containing protein 7 (181 aa).

A signal peptide spans 1 to 21 (MARSLAALLLLLVAAAGDSHA). The BURP domain maps to 65 to 181 (FFLEKDLFPG…RRGRRTGWRP (117 aa)). The segment at 112 to 181 (QLSVPAGSPA…RRGRRTGWRP (70 aa)) is disordered. The span at 128-143 (RPRRSPARRSNARRRS) shows a compositional bias: basic residues. Positions 144–157 (SPWWSSPRPASAPA) are enriched in low complexity. Positions 170–181 (GRRRGRRTGWRP) are enriched in basic residues.

Expressed in roots, stems, leaves and shoot.

This Oryza sativa subsp. japonica (Rice) protein is BURP domain-containing protein 7 (BURP7).